The chain runs to 324 residues: Glyoxylate/hydroxypyruvate reductase B (324 aa).

Residues arginine 237 and glutamate 266 contribute to the active site. Histidine 285 serves as the catalytic Proton donor.

The protein belongs to the D-isomer specific 2-hydroxyacid dehydrogenase family. GhrB subfamily. In terms of assembly, homodimer.

It is found in the cytoplasm. The enzyme catalyses glycolate + NADP(+) = glyoxylate + NADPH + H(+). The catalysed reaction is (R)-glycerate + NAD(+) = 3-hydroxypyruvate + NADH + H(+). It carries out the reaction (R)-glycerate + NADP(+) = 3-hydroxypyruvate + NADPH + H(+). Catalyzes the NADPH-dependent reduction of glyoxylate and hydroxypyruvate into glycolate and glycerate, respectively. The chain is Glyoxylate/hydroxypyruvate reductase B from Escherichia coli (strain K12 / MC4100 / BW2952).